The sequence spans 274 residues: Pantothenate synthetase (274 aa).

ATP is bound at residue 27–34; it reads MGALHQGH. His34 acts as the Proton donor in catalysis. Residue Gln58 participates in (R)-pantoate binding. Residue Gln58 participates in beta-alanine binding. 144 to 147 is a binding site for ATP; sequence GKKD. (R)-pantoate is bound at residue Gln150. Residues Ile173 and 181 to 184 contribute to the ATP site; that span reads LSSR.

The protein belongs to the pantothenate synthetase family. In terms of assembly, homodimer.

It localises to the cytoplasm. It catalyses the reaction (R)-pantoate + beta-alanine + ATP = (R)-pantothenate + AMP + diphosphate + H(+). The protein operates within cofactor biosynthesis; (R)-pantothenate biosynthesis; (R)-pantothenate from (R)-pantoate and beta-alanine: step 1/1. Functionally, catalyzes the condensation of pantoate with beta-alanine in an ATP-dependent reaction via a pantoyl-adenylate intermediate. The protein is Pantothenate synthetase of Sulfurovum sp. (strain NBC37-1).